The sequence spans 157 residues: Fimbrial protein Q (157 aa).

The propeptide occupies 1–6 (MNAQKG). At Phe7 the chain carries N-methylphenylalanine. Cys136 and Cys155 are oxidised to a cystine.

This sequence belongs to the N-Me-Phe pilin family. In terms of assembly, the pili are polar flexible filaments of about 5.4 nanometers diameter and 2.5 micrometers average length; they consist of only a single polypeptide chain arranged in a helical configuration of five subunits per turn in the assembled pilus.

The protein localises to the fimbrium. This is Fimbrial protein Q (tfpQ) from Moraxella bovis.